We begin with the raw amino-acid sequence, 311 residues long: uncharacterized protein (311 aa).

A run of 10 helical transmembrane segments spans residues 13–33, 41–61, 76–96, 103–123, 128–148, 157–177, 192–212, 218–238, 248–268, and 272–292; these read STAV…GFFS, FELV…CWLA, LQTL…FKSF, IAIS…SFFY, NVIS…ISGI, LMGS…FTTL, FLQT…GAFA, NWIM…LLFF, FISI…TVFT, and PDLY…LTLV. EamA domains follow at residues 24–147 and 166–292; these read VIFG…LISG and VLAA…LTLV.

This sequence belongs to the EamA transporter family.

It localises to the cell membrane. This is an uncharacterized protein from Bacillus subtilis (strain 168).